The following is a 479-amino-acid chain: Cruciferin PGCRURSE5 (479 aa).

Residues 1–23 (MVKLAHLLVATFGVLLVLNGCLA) form the signal peptide. 2 disulfides stabilise this stretch: C37–C70 and C113–C296. The Cupin type-1 1 domain maps to 42 to 241 (LDVLQPTETI…ALKMQLRLAQ (200 aa)). T116 bears the Phosphothreonine mark. 3 disordered regions span residues 117–144 (FMDS…GFRD), 196–219 (RTFR…QQQN), and 271–291 (YESE…DNGL). Positions 124–141 (QGQGQQGQQGQQGQQQQG) are enriched in low complexity. A Cupin type-1 2 domain is found at 302-451 (ENIDDPARAD…AFQISLEEAR (150 aa)). T415 and T440 each carry phosphothreonine.

Belongs to the 11S seed storage protein (globulins) family. Hexamer; each subunit is composed of an acidic and a basic chain derived from a single precursor and linked by a disulfide bond.

In terms of biological role, this is a seed storage protein. The sequence is that of Cruciferin PGCRURSE5 (CRURS) from Raphanus sativus (Radish).